The following is a 232-amino-acid chain: Ethylene-responsive transcription factor ERF025 (232 aa).

Polar residues predominate over residues 1–29; it reads MSNNNNSPTTVNQETTTSREVSITLPTDQ. A disordered region spans residues 1–63; that stretch reads MSNNNNSPTT…TATGLSGKHS (63 aa). Residues 30-50 show a composition bias toward low complexity; that stretch reads SPQTSPGSSSSPSPRPSGGSP. Positions 64 to 120 form a DNA-binding region, AP2/ERF; the sequence is IFRGIRLRNGKWVSEIREPRKTTRIWLGTYPVPEMAAAAYDVAALALKGPDAVLNFP. The tract at residues 213–232 is disordered; it reads PTMEDDSPENHEGDNLWSYK.

Belongs to the AP2/ERF transcription factor family. ERF subfamily.

The protein resides in the nucleus. Probably acts as a transcriptional activator. Binds to the GCC-box pathogenesis-related promoter element. May be involved in the regulation of gene expression by stress factors and by components of stress signal transduction pathways. The polypeptide is Ethylene-responsive transcription factor ERF025 (ERF025) (Arabidopsis thaliana (Mouse-ear cress)).